A 509-amino-acid chain; its full sequence is Type II methyltransferase M.BsoBI (509 aa).

Belongs to the N(4)/N(6)-methyltransferase family. N(4) subfamily.

The enzyme catalyses a 2'-deoxycytidine in DNA + S-adenosyl-L-methionine = an N(4)-methyl-2'-deoxycytidine in DNA + S-adenosyl-L-homocysteine + H(+). An alpha subtype methylase that recognizes the double-stranded sequence 5'-CYCGRG-3', methylates C-1 on both strands, and protects the DNA from cleavage by the BsoBI endonuclease. This Geobacillus stearothermophilus (Bacillus stearothermophilus) protein is Type II methyltransferase M.BsoBI.